Consider the following 651-residue polypeptide: Bromodomain-containing protein 7 (651 aa).

Residue K21 forms a Glycyl lysine isopeptide (Lys-Gly) (interchain with G-Cter in SUMO2) linkage. A compositionally biased stretch (polar residues) spans 35–45; sequence TELSTGSSGHD. A disordered region spans residues 35–132; the sequence is TELSTGSSGH…SSLAKQEEVE (98 aa). Positions 47 to 57 are enriched in basic and acidic residues; it reads SLFEDKNDHDK. K52 participates in a covalent cross-link: Glycyl lysine isopeptide (Lys-Gly) (interchain with G-Cter in SUMO2). Over residues 58–69 the composition is skewed to basic residues; that stretch reads HKDRKRKKRKKG. The short motif at 65 to 96 is the Nuclear localization signal element; it reads KRKKGEKQIPGEEKGRKRRRVKEDKKKRDRDR. Positions 70–106 are enriched in basic and acidic residues; that stretch reads EKQIPGEEKGRKRRRVKEDKKKRDRDRVENEAEKDLQ. Glycyl lysine isopeptide (Lys-Gly) (interchain with G-Cter in SUMO2) cross-links involve residues K127, K186, K197, K201, K212, and K241. A Bromo domain is found at 131–235; sequence VEQTPLQEAL…HSGMKILSQE (105 aa). Positions 253 to 301 are disordered; that stretch reads TRKQKDGTDTSQSGEDGGCWQREREDSGDAEAHAFKSPSKENKKKDKDM. The span at 273 to 301 shows a compositional bias: basic and acidic residues; the sequence is QREREDSGDAEAHAFKSPSKENKKKDKDM. A phosphoserine mark is found at S279 and S289. Glycyl lysine isopeptide (Lys-Gly) (interchain with G-Cter in SUMO2) cross-links involve residues K305 and K307. K328 is subject to N6-acetyllysine. K344 is covalently cross-linked (Glycyl lysine isopeptide (Lys-Gly) (interchain with G-Cter in SUMO2)). A Phosphoserine modification is found at S380. Residue K389 forms a Glycyl lysine isopeptide (Lys-Gly) (interchain with G-Cter in SUMO2) linkage. The residue at position 482 (S482) is a Phosphoserine. A Phosphothreonine modification is found at T514. Positions 536–567 form a coiled coil; sequence SEEAEIFQKKLDETTRLLRELQEAQNERLSTR. Phosphoserine is present on S621.

In terms of assembly, interacts with TRIM24, PTPN13 and DVL1. Identified in a complex with SMARCA4/BRG1, SMARCC1/BAF155, SMARCE1/BAF57, DPF2/BAF45D and ARID2, subunits of the SWI/SNF-B (PBAF) chromatin remodeling complex. Interacts with IRF2 and HNRPUL1. Interacts (via N-terminus) with TP53. Interacts (via C-terminus) with EP300. Interacts with BRCA1. Interacts (via bromo domain) with histone H3 (via N-terminus) acetylated at 'Lys-14' (H3K14ac). Has low affinity for histone H3 acetylated at 'Lys-9' (H3K9ac). Has the highest affinity for histone H3 that is acetylated both at 'Lys-9' (H3K9ac) and at 'Lys-14' (H3K14ac). Has very low affinity for non-acetylated histone H3. Interacts (via bromo domain) with histone H4 (via N-terminus) acetylated at 'Lys-8' (H3K8ac) (in vitro).

It is found in the nucleus. It localises to the chromosome. Its function is as follows. Acts both as coactivator and as corepressor. May play a role in chromatin remodeling. Activator of the Wnt signaling pathway in a DVL1-dependent manner by negatively regulating the GSK3B phosphotransferase activity. Induces dephosphorylation of GSK3B at 'Tyr-216'. Down-regulates TRIM24-mediated activation of transcriptional activation by AR. Transcriptional corepressor that down-regulates the expression of target genes. Binds to target promoters, leading to increased histone H3 acetylation at 'Lys-9' (H3K9ac). Binds to the ESR1 promoter. Recruits BRCA1 and POU2F1 to the ESR1 promoter. Coactivator for TP53-mediated activation of transcription of a set of target genes. Required for TP53-mediated cell-cycle arrest in response to oncogene activation. Promotes acetylation of TP53 at 'Lys-382', and thereby promotes efficient recruitment of TP53 to target promoters. Inhibits cell cycle progression from G1 to S phase. The chain is Bromodomain-containing protein 7 (BRD7) from Homo sapiens (Human).